Here is a 56-residue protein sequence, read N- to C-terminus: Potassium channel toxin alpha-KTx 9.2 (56 aa).

A signal peptide spans 1-28; sequence MSRLFTLVLIVLAMNVMMAIISDPVVEA. 3 disulfide bridges follow: cysteine 31–cysteine 47, cysteine 34–cysteine 52, and cysteine 38–cysteine 54.

As to expression, expressed by the venom gland.

Its subcellular location is the secreted. In terms of biological role, blocks small conductance calcium-activated potassium channels (KCNN, SK). Low toxicity by intracerebroventricular injection into mice. This is Potassium channel toxin alpha-KTx 9.2 from Olivierus martensii (Manchurian scorpion).